Reading from the N-terminus, the 231-residue chain is Chromosome partition protein MukE (231 aa).

The segment at 204–231 is disordered; that stretch reads TPEPSQQSLLENPTAEYDEEQTEWEDEA. The span at 219–231 shows a compositional bias: acidic residues; that stretch reads EYDEEQTEWEDEA.

It belongs to the MukE family. Interacts, and probably forms a ternary complex, with MukF and MukB. The complex formation is stimulated by calcium or magnesium.

The protein localises to the cytoplasm. Its subcellular location is the nucleoid. Its function is as follows. Involved in chromosome condensation, segregation and cell cycle progression. May participate in facilitating chromosome segregation by condensation DNA from both sides of a centrally located replisome during cell division. Probably acts via its interaction with MukB and MukF. The chain is Chromosome partition protein MukE from Vibrio cholerae serotype O1 (strain ATCC 39315 / El Tor Inaba N16961).